The primary structure comprises 201 residues: Regulator of G-protein signaling 1 (201 aa).

The 117-residue stretch at serine 75–alanine 191 folds into the RGS domain.

It localises to the cell membrane. The protein localises to the cytoplasm. Its subcellular location is the cytosol. Functionally, regulates G protein-coupled receptor signaling cascades, including signaling downstream of the N-formylpeptide chemoattractant receptors and leukotriene receptors. Inhibits B cell chemotaxis. Inhibits signal transduction by increasing the GTPase activity of G protein alpha subunits, thereby driving them into their inactive GDP-bound form. In Xenopus laevis (African clawed frog), this protein is Regulator of G-protein signaling 1 (rgs1).